The following is a 40-amino-acid chain: Alpha-conotoxin-like Lp1.6b (40 aa).

Residues 1 to 23 constitute a propeptide that is removed on maturation; that stretch reads VVLGPASDGRNAAANNKASDLIR. Gln24 carries the post-translational modification Pyrrolidone carboxylic acid. 2 disulfide bridges follow: Cys26-Cys32 and Cys27-Cys39.

This sequence belongs to the conotoxin A superfamily. As to expression, expressed by the venom duct.

The protein localises to the secreted. Alpha-conotoxins act on postsynaptic membranes, they bind to the nicotinic acetylcholine receptors (nAChR) and thus inhibit them. This Conus leopardus (Leopard cone) protein is Alpha-conotoxin-like Lp1.6b.